We begin with the raw amino-acid sequence, 442 residues long: tRNA-2-methylthio-N(6)-dimethylallyladenosine synthase (442 aa).

One can recognise an MTTase N-terminal domain in the interval 5-122 (KKVFIKTLGC…LPEMIKQKQK (118 aa)). Cys-14, Cys-51, Cys-85, Cys-159, Cys-163, and Cys-166 together coordinate [4Fe-4S] cluster. The region spanning 145-378 (KAEGAKAYVS…DLLNSNAQII (234 aa)) is the Radical SAM core domain. A TRAM domain is found at 380–442 (RQMVGTNQRI…LPNSLRGELI (63 aa)).

It belongs to the methylthiotransferase family. MiaB subfamily. Monomer. The cofactor is [4Fe-4S] cluster.

It localises to the cytoplasm. It catalyses the reaction N(6)-dimethylallyladenosine(37) in tRNA + (sulfur carrier)-SH + AH2 + 2 S-adenosyl-L-methionine = 2-methylsulfanyl-N(6)-dimethylallyladenosine(37) in tRNA + (sulfur carrier)-H + 5'-deoxyadenosine + L-methionine + A + S-adenosyl-L-homocysteine + 2 H(+). Its function is as follows. Catalyzes the methylthiolation of N6-(dimethylallyl)adenosine (i(6)A), leading to the formation of 2-methylthio-N6-(dimethylallyl)adenosine (ms(2)i(6)A) at position 37 in tRNAs that read codons beginning with uridine. The polypeptide is tRNA-2-methylthio-N(6)-dimethylallyladenosine synthase (Francisella tularensis subsp. tularensis (strain FSC 198)).